Consider the following 382-residue polypeptide: Putative acetyl-CoA C-acetyltransferase VraB (382 aa).

Residue Cys-86 is the Acyl-thioester intermediate of the active site. His-338 (proton acceptor) is an active-site residue.

This sequence belongs to the thiolase-like superfamily. Thiolase family.

In Staphylococcus epidermidis (strain ATCC 35984 / DSM 28319 / BCRC 17069 / CCUG 31568 / BM 3577 / RP62A), this protein is Putative acetyl-CoA C-acetyltransferase VraB (vraB).